The following is a 122-amino-acid chain: MLKKADKNANRLQRHKRVRRKISGTSQRPRLCVFRSANNIYAQIIDDTKRVTLVAASSLEAEVKSAVNHTGNKEAAKKVGELVAKKAVEKGITEVVFDRGGYLYHGRIQELAEGAREAGLKF.

A disordered region spans residues 1–24 (MLKKADKNANRLQRHKRVRRKISG). The span at 12 to 22 (LQRHKRVRRKI) shows a compositional bias: basic residues.

This sequence belongs to the universal ribosomal protein uL18 family. In terms of assembly, part of the 50S ribosomal subunit; part of the 5S rRNA/L5/L18/L25 subcomplex. Contacts the 5S and 23S rRNAs.

Functionally, this is one of the proteins that bind and probably mediate the attachment of the 5S RNA into the large ribosomal subunit, where it forms part of the central protuberance. This is Large ribosomal subunit protein uL18 from Clostridioides difficile (strain 630) (Peptoclostridium difficile).